Here is a 269-residue protein sequence, read N- to C-terminus: C-type lectin domain family 1 member A (269 aa).

Topologically, residues 1–51 are cytoplasmic; sequence MQAKYSSTRDMLDDDDTTISLYSGTSTVTRRAEPRHSENGTPSSVWRPVAL. A helical; Signal-anchor for type II membrane protein membrane pass occupies residues 52 to 72; it reads TLLTLCLVLLVGLAALGLVFF. At 73-269 the chain is on the extracellular side; the sequence is QFYQLSNIQQ…AGRVVPGELQ (197 aa). 4 N-linked (GlcNAc...) asparagine glycosylation sites follow: Asn94, Asn126, Asn168, and Asn202. One can recognise a C-type lectin domain in the interval 143-257; sequence YGDKCYQFYK…CKELRRCACE (115 aa). Cystine bridges form between Cys164–Cys256 and Cys235–Cys248.

It is found in the membrane. The chain is C-type lectin domain family 1 member A (Clec1a) from Mus musculus (Mouse).